A 158-amino-acid polypeptide reads, in one-letter code: Antitoxin PezA (158 aa).

Positions 6-60 (IKSLRKTHDLTQLEFARIVGISRNSLSRYENGTSSVSTELIDIICQKFNVSYVDI) constitute an HTH cro/C1-type domain. The H-T-H motif DNA-binding region spans 17-36 (QLEFARIVGISRNSLSRYEN).

In terms of assembly, probably a homodimer, forms a PezA(2)PezT(2) heterotetramer. The heterotetramer is much more stable than either of the proteins alone, and a specific mechanism may be necessary to liberate the toxin.

Functionally, antitoxin component of a type II toxin-antitoxin (TA) system. Upon expression in E.coli neutralizes the toxic effect of cognate toxin PezT. Represses transcription of its own operon, PezT acts as a corepressor, considerably increasing repression. This Streptococcus pneumoniae serotype 4 (strain ATCC BAA-334 / TIGR4) protein is Antitoxin PezA (pezA).